The sequence spans 95 residues: Aspartyl/glutamyl-tRNA(Asn/Gln) amidotransferase subunit C (95 aa).

It belongs to the GatC family. In terms of assembly, heterotrimer of A, B and C subunits.

The enzyme catalyses L-glutamyl-tRNA(Gln) + L-glutamine + ATP + H2O = L-glutaminyl-tRNA(Gln) + L-glutamate + ADP + phosphate + H(+). The catalysed reaction is L-aspartyl-tRNA(Asn) + L-glutamine + ATP + H2O = L-asparaginyl-tRNA(Asn) + L-glutamate + ADP + phosphate + 2 H(+). Its function is as follows. Allows the formation of correctly charged Asn-tRNA(Asn) or Gln-tRNA(Gln) through the transamidation of misacylated Asp-tRNA(Asn) or Glu-tRNA(Gln) in organisms which lack either or both of asparaginyl-tRNA or glutaminyl-tRNA synthetases. The reaction takes place in the presence of glutamine and ATP through an activated phospho-Asp-tRNA(Asn) or phospho-Glu-tRNA(Gln). In Rhizorhabdus wittichii (strain DSM 6014 / CCUG 31198 / JCM 15750 / NBRC 105917 / EY 4224 / RW1) (Sphingomonas wittichii), this protein is Aspartyl/glutamyl-tRNA(Asn/Gln) amidotransferase subunit C.